We begin with the raw amino-acid sequence, 248 residues long: tRNA (guanine-N(1)-)-methyltransferase (248 aa).

S-adenosyl-L-methionine contacts are provided by residues G113 and I133 to L138.

It belongs to the RNA methyltransferase TrmD family. In terms of assembly, homodimer.

Its subcellular location is the cytoplasm. It catalyses the reaction guanosine(37) in tRNA + S-adenosyl-L-methionine = N(1)-methylguanosine(37) in tRNA + S-adenosyl-L-homocysteine + H(+). Its function is as follows. Specifically methylates guanosine-37 in various tRNAs. The polypeptide is tRNA (guanine-N(1)-)-methyltransferase (Dehalococcoides mccartyi (strain ATCC BAA-2100 / JCM 16839 / KCTC 5957 / BAV1)).